Reading from the N-terminus, the 401-residue chain is Dual-specificity RNA methyltransferase RlmN (401 aa).

Residue Glu-114 is the Proton acceptor of the active site. The Radical SAM core domain maps to 120–365 (DKGRGTLCVS…TIVRRTRGDD (246 aa)). Cys-127 and Cys-370 form a disulfide bridge. Positions 134, 138, and 141 each coordinate [4Fe-4S] cluster. S-adenosyl-L-methionine is bound by residues 187-188 (GE), Ser-219, 241-243 (SLH), and Asn-327. Cys-370 acts as the S-methylcysteine intermediate in catalysis.

It belongs to the radical SAM superfamily. RlmN family. The cofactor is [4Fe-4S] cluster.

It localises to the cytoplasm. The catalysed reaction is adenosine(2503) in 23S rRNA + 2 reduced [2Fe-2S]-[ferredoxin] + 2 S-adenosyl-L-methionine = 2-methyladenosine(2503) in 23S rRNA + 5'-deoxyadenosine + L-methionine + 2 oxidized [2Fe-2S]-[ferredoxin] + S-adenosyl-L-homocysteine. It catalyses the reaction adenosine(37) in tRNA + 2 reduced [2Fe-2S]-[ferredoxin] + 2 S-adenosyl-L-methionine = 2-methyladenosine(37) in tRNA + 5'-deoxyadenosine + L-methionine + 2 oxidized [2Fe-2S]-[ferredoxin] + S-adenosyl-L-homocysteine. Specifically methylates position 2 of adenine 2503 in 23S rRNA and position 2 of adenine 37 in tRNAs. m2A2503 modification seems to play a crucial role in the proofreading step occurring at the peptidyl transferase center and thus would serve to optimize ribosomal fidelity. This is Dual-specificity RNA methyltransferase RlmN from Xanthomonas oryzae pv. oryzae (strain MAFF 311018).